A 164-amino-acid chain; its full sequence is UPF0561 protein C2orf68 homolog (164 aa).

Basic and acidic residues-rich tracts occupy residues 1-13 (MEVI…ESVK) and 35-49 (IARD…QAKE). A disordered region spans residues 1–98 (MEVIRDGEGE…WNESSSGTEM (98 aa)). The span at 50–64 (KQRRRHTNTPRRPRR) shows a compositional bias: basic residues.

It belongs to the UPF0561 family.

In Danio rerio (Zebrafish), this protein is UPF0561 protein C2orf68 homolog.